The sequence spans 320 residues: Beta-ketoacyl-[acyl-carrier-protein] synthase III (320 aa).

Residues Cys114 and His247 contribute to the active site. The segment at 248–252 (QANRR) is ACP-binding. Asn277 is an active-site residue.

Belongs to the thiolase-like superfamily. FabH family. In terms of assembly, homodimer.

Its subcellular location is the cytoplasm. The enzyme catalyses malonyl-[ACP] + acetyl-CoA + H(+) = 3-oxobutanoyl-[ACP] + CO2 + CoA. The protein operates within lipid metabolism; fatty acid biosynthesis. In terms of biological role, catalyzes the condensation reaction of fatty acid synthesis by the addition to an acyl acceptor of two carbons from malonyl-ACP. Catalyzes the first condensation reaction which initiates fatty acid synthesis and may therefore play a role in governing the total rate of fatty acid production. Possesses both acetoacetyl-ACP synthase and acetyl transacylase activities. Its substrate specificity determines the biosynthesis of branched-chain and/or straight-chain of fatty acids. The polypeptide is Beta-ketoacyl-[acyl-carrier-protein] synthase III (Neisseria meningitidis serogroup A / serotype 4A (strain DSM 15465 / Z2491)).